Reading from the N-terminus, the 266-residue chain is NAD kinase 1 (266 aa).

D45 acts as the Proton acceptor in catalysis. NAD(+) contacts are provided by residues D45–G46, N122–E123, and R148. An ATP-binding site is contributed by D150. NAD(+)-binding positions include S158 and T161 to A166.

Belongs to the NAD kinase family. In terms of assembly, homodimer. Ca(2+) is required as a cofactor. The cofactor is Mn(2+).

It localises to the cytoplasm. It carries out the reaction NAD(+) + ATP = ADP + NADP(+) + H(+). With respect to regulation, allosterically inhibited by NADP and activated by quinolinic acid. Strongly inhibited by HgCl(2). Functionally, involved in the regulation of the intracellular balance of NAD and NADP, and is a key enzyme in the biosynthesis of NADP. Catalyzes specifically the phosphorylation on 2'-hydroxyl of the adenosine moiety of NAD to yield NADP. It can use ATP and other nucleoside triphosphates (GTP, UTP) as well as inorganic polyphosphate (poly(P)) as a source of phosphorus. This chain is NAD kinase 1 (ppnKA), found in Bacillus subtilis (strain 168).